The chain runs to 22 residues: Peptide PGLa-BM3 (22 aa).

L22 is subject to Leucine amide.

As to expression, expressed by the skin glands.

It localises to the secreted. In terms of biological role, antimicrobial peptide. The polypeptide is Peptide PGLa-BM3 (Xenopus boumbaensis (Mawa clawed frog)).